We begin with the raw amino-acid sequence, 416 residues long: Nuclear hormone receptor family member nhr-67 (416 aa).

Positions 18–98 (DVDCRVCEDH…IGMNKDAVQH (81 aa)) form a DNA-binding region, nuclear receptor. 2 consecutive NR C4-type zinc fingers follow at residues 21-41 (CRVC…CDGC) and 57-86 (CKNK…LRKC). Positions 331-398 (KTETEEGEDI…SSRPRHSIRS (68 aa)) are disordered. The span at 335–346 (EEGEDIEEEDDA) shows a compositional bias: acidic residues. Positions 377–390 (SSTQPSSASSPSSS) are enriched in low complexity.

This sequence belongs to the nuclear hormone receptor family. In terms of tissue distribution, expressed in linker cell.

It localises to the nucleus. Orphan nuclear receptor that binds DNA containing an extended core motif half-site sequence 5'-AAGTCA-3'. In males, plays an essential role in the migration of the linker cell which guides gonad elongation during the L3 and L4 stages of larval development by negatively regulating the expression of netrin receptor unc-5 at the mid-L3 stage. Involved in the regulation of non-apoptotic cell death in the linker cell, acting upstream of or in parallel to transcription factor hsf-1. Represses hypoxia response genes, fmo-2 and acs-2, in both normoxic and hypoxic conditions, probably acting via repression of nuclear receptor nhr-49. This is Nuclear hormone receptor family member nhr-67 (nhr-67) from Caenorhabditis elegans.